The primary structure comprises 453 residues: GTPase Der (453 aa).

2 EngA-type G domains span residues 4 to 169 (PIVA…PTQG) and 177 to 352 (TKIA…NEYQ). GTP is bound by residues 10–17 (GRPNVGKS), 57–61 (DTGGL), 120–123 (NKCE), 183–190 (GRPNVGKS), 230–234 (DTAGI), and 295–298 (NKWD). The KH-like domain maps to 353–438 (RRVTTSVINE…PIRLLWRGKK (86 aa)).

Belongs to the TRAFAC class TrmE-Era-EngA-EngB-Septin-like GTPase superfamily. EngA (Der) GTPase family. In terms of assembly, associates with the 50S ribosomal subunit.

Its function is as follows. GTPase that plays an essential role in the late steps of ribosome biogenesis. The chain is GTPase Der from Trichodesmium erythraeum (strain IMS101).